The primary structure comprises 391 residues: Carbamoyl phosphate synthase small chain (391 aa).

A CPSase region spans residues M1–K187. The L-glutamine site is built by S50, G239, and G241. One can recognise a Glutamine amidotransferase type-1 domain in the interval R191–A376. C266 (nucleophile) is an active-site residue. 5 residues coordinate L-glutamine: L267, Q270, N308, G310, and Y311. Catalysis depends on residues H349 and E351.

This sequence belongs to the CarA family. Composed of two chains; the small (or glutamine) chain promotes the hydrolysis of glutamine to ammonia, which is used by the large (or ammonia) chain to synthesize carbamoyl phosphate. Tetramer of heterodimers (alpha,beta)4.

The enzyme catalyses hydrogencarbonate + L-glutamine + 2 ATP + H2O = carbamoyl phosphate + L-glutamate + 2 ADP + phosphate + 2 H(+). It catalyses the reaction L-glutamine + H2O = L-glutamate + NH4(+). The protein operates within amino-acid biosynthesis; L-arginine biosynthesis; carbamoyl phosphate from bicarbonate: step 1/1. It participates in pyrimidine metabolism; UMP biosynthesis via de novo pathway; (S)-dihydroorotate from bicarbonate: step 1/3. In terms of biological role, small subunit of the glutamine-dependent carbamoyl phosphate synthetase (CPSase). CPSase catalyzes the formation of carbamoyl phosphate from the ammonia moiety of glutamine, carbonate, and phosphate donated by ATP, constituting the first step of 2 biosynthetic pathways, one leading to arginine and/or urea and the other to pyrimidine nucleotides. The small subunit (glutamine amidotransferase) binds and cleaves glutamine to supply the large subunit with the substrate ammonia. The protein is Carbamoyl phosphate synthase small chain of Thermus thermophilus (strain ATCC BAA-163 / DSM 7039 / HB27).